We begin with the raw amino-acid sequence, 440 residues long: Argininosuccinate lyase (440 aa).

Belongs to the lyase 1 family. Argininosuccinate lyase subfamily.

The protein resides in the cytoplasm. The catalysed reaction is 2-(N(omega)-L-arginino)succinate = fumarate + L-arginine. It participates in amino-acid biosynthesis; L-arginine biosynthesis; L-arginine from L-ornithine and carbamoyl phosphate: step 3/3. The protein is Argininosuccinate lyase of Clostridium botulinum (strain Langeland / NCTC 10281 / Type F).